We begin with the raw amino-acid sequence, 277 residues long: Large ribosomal subunit protein uL2 (277 aa).

Disordered stretches follow at residues 38 to 58 (HRKGGRNNQGRLTVRHQGGGH) and 219 to 277 (TVRG…RKNK).

The protein belongs to the universal ribosomal protein uL2 family. Part of the 50S ribosomal subunit. Forms a bridge to the 30S subunit in the 70S ribosome.

In terms of biological role, one of the primary rRNA binding proteins. Required for association of the 30S and 50S subunits to form the 70S ribosome, for tRNA binding and peptide bond formation. It has been suggested to have peptidyltransferase activity; this is somewhat controversial. Makes several contacts with the 16S rRNA in the 70S ribosome. The protein is Large ribosomal subunit protein uL2 of Bacillus pumilus (strain SAFR-032).